We begin with the raw amino-acid sequence, 334 residues long: Beta-hexosaminidase (334 aa).

Substrate-binding positions include Asp-60, Arg-68, Arg-133, and 163-164 (KH). His-176 serves as the catalytic Proton donor/acceptor. The active-site Nucleophile is Asp-247.

Belongs to the glycosyl hydrolase 3 family. NagZ subfamily.

The protein localises to the cytoplasm. It carries out the reaction Hydrolysis of terminal non-reducing N-acetyl-D-hexosamine residues in N-acetyl-beta-D-hexosaminides.. Its pathway is cell wall biogenesis; peptidoglycan recycling. Plays a role in peptidoglycan recycling by cleaving the terminal beta-1,4-linked N-acetylglucosamine (GlcNAc) from peptide-linked peptidoglycan fragments, giving rise to free GlcNAc, anhydro-N-acetylmuramic acid and anhydro-N-acetylmuramic acid-linked peptides. This chain is Beta-hexosaminidase, found in Xanthomonas oryzae pv. oryzae (strain MAFF 311018).